A 553-amino-acid chain; its full sequence is Keratin, type II cytoskeletal 73 (553 aa).

Residues 1-130 (MNRQFTCKSG…DPEIQKVRAQ (130 aa)) are head. The segment at 131–166 (EREQIKALNNKFASFIDKVRFLEQQNQVLQTKWELL) is coil 1A. One can recognise an IF rod domain in the interval 131-444 (EREQIKALNN…KLLEGEECRM (314 aa)). A linker 1 region spans residues 167–185 (QQLDLSNCRRNLEPVYEAH). The coil 1B stretch occupies residues 186–277 (ISSLQKQLDS…CLYEGEITQM (92 aa)). A linker 12 region spans residues 278–301 (QSHISDTSVVLSMDNNRNLDLDSI). Residues 302–440 (IAEVRAQYED…ATYRKLLEGE (139 aa)) are coil 2. The tract at residues 441-539 (ECRMSGEHTN…LGSPSKKTMR (99 aa)) is tail.

This sequence belongs to the intermediate filament family. As to quaternary structure, heterotetramer of two type I and two type II keratins.

In terms of biological role, has a role in hair formation. Specific component of keratin intermediate filaments in the inner root sheath (IRS) of the hair follicle. This chain is Keratin, type II cytoskeletal 73 (Krt73), found in Rattus norvegicus (Rat).